A 1308-amino-acid polypeptide reads, in one-letter code: MAWLWLLCALLPAFMVSVTANSPPSFGVNMTLVTLPEDLPVGAVAFWLVATDSDNDHLTYGISGPNASYFSVNANTGEVKLASPLDFETVPFFKITISTSDGLNIRTAEMQVIVEDRNDNIPVFLNTEFSTSINETLPVGSVVFSVLAEDKDTGTAGLVQYFIEKVIPSTANSNNLFRILENGSIVLNDTLSYNNKSAFYQLELKACDSGGILDNKPKTQCSQPVFVSISVIDEPDLDPRFIREFYSASVAEDATLGTSVLTVEAVDSDKGINDIVTYSVSNSTRPGWFDIREDGVIFVNGSLDREQLLLENEEVQIQVTATEKNLNIYGQEAKASMWVTIRVTDVNDHKPEFYNCSLPGCSFSPQEAQVNFIGYVDEHASARISIDGLTMVAYDPDQGDNGTFLLSLNGQDAEAFNVSPERAAGSVSVQVVVRNSEMVDYEKETVMVVEVVATDSVSNNYSVATVTIHLRNINDHRPVFSQSLYELTVPEHCPTGYLVTDKIQATDLDGDEWGPITYSLLPGNGADLFEVEPNSGNLTVKNGTLLDREKQAVYYLTLQATDGGNQSTTTALEITLLDINDNPPVVRGSYNVFVPEENGNVSVTIQAYDDDQPDTNNSLLVFSLLPGPYSSNFSLDPNTGLLRNLGPLDREAIDPALEGRIVLTVIVADCGEPSLSTNVNVTITVEDINDNLPVFNQSYEFSVWERVPGAWVGTVKAWDADQTAANNRISFSLSGTGANNFILQGNVLEQGWAEGSLWLLPDVRLDYETQKFFHLTVSAENPGPQGLDSTANVTVTVMDVNDEPPTLDAASLQAISVTENGSEHGQVTRVIAQDVDTAALLRIELVDVICTKAGVDVGSVCHGWFSVDGNGSVYINQSEAIDYEACHLVTLVVRAYDLNTDPGFDAYSSNGSLLINIKDKNDNAPYFLPNNQTFVIIPELVLPNQQVASVQARDEDSEDNGIIMFSILKAEFVRKDGTSNPVQVFRITRSVEAGLFTGSIELVTNLDSTIQGTYQVTVQAQDQPTLGPALETQTTLNLFTVDQSYRVRLQFSTSKEDVGANMEEIKEALIQATRTSVYVVTIQNIDSTARARASSYMDAYFVFSNGTALTLTELNMMIRKDQDALRQLLQLGLVVVSSQESQEPDQQKLLTSVIIGLVVSLVLVLVILITALVCLRKSYHRKLRAMKAGKEARKTPIETTAPTAAIPGTNMYNTDRANPVLDLPTKDLGLECHSSSDLDYDSLNSLDENSVDLDMDSKEFKRKDLPGDPPEPDPEPLTAVLSGRSAGASEQQKKNLSFTNPGLDTTDL.

The signal sequence occupies residues 1–20; sequence MAWLWLLCALLPAFMVSVTA. The Extracellular portion of the chain corresponds to 21–1152; sequence NSPPSFGVNM…EPDQQKLLTS (1132 aa). 9 consecutive Cadherin domains span residues 33–124, 125–241, 242–353, 368–480, 481–586, 586–695, 695–807, 809–927, and 929–1051; these read VTLP…IPVF, LNTE…DPRF, IREF…KPEF, AQVN…RPVF, SQSL…PPVV, VRGS…LPVF, FNQS…PPTL, AASL…APYF, and PNNQ…RLQF. Residues 1153–1173 form a helical membrane-spanning segment; the sequence is VIIGLVVSLVLVLVILITALV. At 1174-1308 the chain is on the cytoplasmic side; it reads CLRKSYHRKL…TNPGLDTTDL (135 aa). Residues 1178 to 1308 form a mediates interaction with USH1C and MYO7B and is required for proper localization to microvilli tips and function in microvilli organization region; sequence SYHRKLRAMK…TNPGLDTTDL (131 aa). S1245 is subject to Phosphoserine. A disordered region spans residues 1251 to 1308; sequence VDLDMDSKEFKRKDLPGDPPEPDPEPLTAVLSGRSAGASEQQKKNLSFTNPGLDTTDL. Positions 1255–1266 are enriched in basic and acidic residues; sequence MDSKEFKRKDLP. The span at 1288 to 1308 shows a compositional bias: polar residues; that stretch reads ASEQQKKNLSFTNPGLDTTDL. The residue at position 1297 (S1297) is a Phosphoserine.

In terms of assembly, part of the IMAC/intermicrovillar adhesion complex/intermicrovillar tip-link complex composed of ANKS4B, MYO7B, USH1C, CDHR2 and CDHR5. Interacts with MAST2. Interacts (via cytoplasmic domain) with USH1C and MYO7B; required for proper localization of CDHR2 to microvilli tips and its function in brush border differentiation.

It localises to the apical cell membrane. The protein localises to the cell projection. It is found in the microvillus membrane. The protein resides in the cell junction. Functionally, intermicrovillar adhesion molecule that forms, via its extracellular domain, calcium-dependent heterophilic complexes with CDHR5 on adjacent microvilli. Thereby, controls the packing of microvilli at the apical membrane of epithelial cells. Through its cytoplasmic domain, interacts with microvillus cytoplasmic proteins to form the intermicrovillar adhesion complex/IMAC. This complex plays a central role in microvilli and epithelial brush border differentiation. May also play a role in cell-cell adhesion and contact inhibition in epithelial cells. The protein is Cadherin-related family member 2 of Mus musculus (Mouse).